The sequence spans 29 residues: Cytochrome b6-f complex subunit 8 (29 aa).

Residues 3 to 23 (IVSLAWAALMVVFTFSLSLVV) form a helical membrane-spanning segment.

Belongs to the PetN family. The 4 large subunits of the cytochrome b6-f complex are cytochrome b6, subunit IV (17 kDa polypeptide, PetD), cytochrome f and the Rieske protein, while the 4 small subunits are PetG, PetL, PetM and PetN. The complex functions as a dimer.

Its subcellular location is the plastid. It localises to the chloroplast thylakoid membrane. Its function is as follows. Component of the cytochrome b6-f complex, which mediates electron transfer between photosystem II (PSII) and photosystem I (PSI), cyclic electron flow around PSI, and state transitions. This Solanum bulbocastanum (Wild potato) protein is Cytochrome b6-f complex subunit 8.